Consider the following 282-residue polypeptide: Pantothenate synthetase (282 aa).

30–37 (MGYLHAGH) lines the ATP pocket. Catalysis depends on H37, which acts as the Proton donor. Q61 contacts (R)-pantoate. Q61 contributes to the beta-alanine binding site. ATP is bound at residue 147–150 (GKKD). Position 153 (Q153) interacts with (R)-pantoate. Residues V176 and 184-187 (MSSR) contribute to the ATP site.

It belongs to the pantothenate synthetase family. Homodimer.

It localises to the cytoplasm. It carries out the reaction (R)-pantoate + beta-alanine + ATP = (R)-pantothenate + AMP + diphosphate + H(+). The protein operates within cofactor biosynthesis; (R)-pantothenate biosynthesis; (R)-pantothenate from (R)-pantoate and beta-alanine: step 1/1. Functionally, catalyzes the condensation of pantoate with beta-alanine in an ATP-dependent reaction via a pantoyl-adenylate intermediate. This chain is Pantothenate synthetase, found in Geotalea uraniireducens (strain Rf4) (Geobacter uraniireducens).